Here is a 72-residue protein sequence, read N- to C-terminus: Translational regulator CsrA (72 aa).

This sequence belongs to the CsrA/RsmA family. As to quaternary structure, homodimer; the beta-strands of each monomer intercalate to form a hydrophobic core, while the alpha-helices form wings that extend away from the core.

The protein localises to the cytoplasm. Its function is as follows. A translational regulator that binds mRNA to regulate translation initiation and/or mRNA stability. Usually binds in the 5'-UTR at or near the Shine-Dalgarno sequence preventing ribosome-binding, thus repressing translation. Its main target seems to be the major flagellin gene, while its function is anatagonized by FliW. The chain is Translational regulator CsrA from Clostridium botulinum (strain 657 / Type Ba4).